A 413-amino-acid chain; its full sequence is Serine hydroxymethyltransferase (413 aa).

(6S)-5,6,7,8-tetrahydrofolate is bound by residues leucine 117 and 121-123 (GHL). Lysine 226 carries the post-translational modification N6-(pyridoxal phosphate)lysine. (6S)-5,6,7,8-tetrahydrofolate contacts are provided by residues glutamate 239 and 349 to 351 (SPF).

It belongs to the SHMT family. As to quaternary structure, homodimer. The cofactor is pyridoxal 5'-phosphate.

It localises to the cytoplasm. It catalyses the reaction (6R)-5,10-methylene-5,6,7,8-tetrahydrofolate + glycine + H2O = (6S)-5,6,7,8-tetrahydrofolate + L-serine. The protein operates within one-carbon metabolism; tetrahydrofolate interconversion. It functions in the pathway amino-acid biosynthesis; glycine biosynthesis; glycine from L-serine: step 1/1. Catalyzes the reversible interconversion of serine and glycine with tetrahydrofolate (THF) serving as the one-carbon carrier. This reaction serves as the major source of one-carbon groups required for the biosynthesis of purines, thymidylate, methionine, and other important biomolecules. Also exhibits THF-independent aldolase activity toward beta-hydroxyamino acids, producing glycine and aldehydes, via a retro-aldol mechanism. This Bacillus mycoides (strain KBAB4) (Bacillus weihenstephanensis) protein is Serine hydroxymethyltransferase.